Here is a 432-residue protein sequence, read N- to C-terminus: Anaerobic glycerol-3-phosphate dehydrogenase subunit B (432 aa).

Belongs to the anaerobic G-3-P dehydrogenase subunit B family. In terms of assembly, composed of a catalytic GlpA/B dimer and of membrane bound GlpC. FMN serves as cofactor.

It catalyses the reaction a quinone + sn-glycerol 3-phosphate = dihydroxyacetone phosphate + a quinol. It functions in the pathway polyol metabolism; glycerol degradation via glycerol kinase pathway; glycerone phosphate from sn-glycerol 3-phosphate (anaerobic route): step 1/1. Its function is as follows. Conversion of glycerol 3-phosphate to dihydroxyacetone. Uses fumarate or nitrate as electron acceptor. The protein is Anaerobic glycerol-3-phosphate dehydrogenase subunit B of Haemophilus influenzae (strain PittGG).